Reading from the N-terminus, the 564-residue chain is Pyruvate decarboxylase (564 aa).

Residues D28 and H115 each contribute to the pyruvate site. Residues T390 and 413-415 (GSI) contribute to the thiamine diphosphate site. D444 provides a ligand contact to Mg(2+). Residues 445-446 (GS) and 471-476 (NDGYTI) each bind thiamine diphosphate. Residues N471 and G473 each coordinate Mg(2+). Residue E477 participates in pyruvate binding.

The protein belongs to the TPP enzyme family. In terms of assembly, homotetramer. It depends on Mg(2+) as a cofactor. Requires thiamine diphosphate as cofactor.

It carries out the reaction a 2-oxocarboxylate + H(+) = an aldehyde + CO2. The catalysed reaction is pyruvate + H(+) = acetaldehyde + CO2. The protein is Pyruvate decarboxylase (PDC1) of Kluyveromyces marxianus (Yeast).